A 204-amino-acid chain; its full sequence is Urease accessory protein UreG (204 aa).

12–19 (GPVGSGKT) is a binding site for GTP.

This sequence belongs to the SIMIBI class G3E GTPase family. UreG subfamily. In terms of assembly, homodimer. UreD, UreF and UreG form a complex that acts as a GTP-hydrolysis-dependent molecular chaperone, activating the urease apoprotein by helping to assemble the nickel containing metallocenter of UreC. The UreE protein probably delivers the nickel.

The protein localises to the cytoplasm. Functionally, facilitates the functional incorporation of the urease nickel metallocenter. This process requires GTP hydrolysis, probably effectuated by UreG. The sequence is that of Urease accessory protein UreG from Pseudomonas fluorescens (strain Pf0-1).